The chain runs to 634 residues: Sodium-dependent neutral amino acid transporter B(0)AT1 (634 aa).

Residues 1–41 (MVRLVLPNPGLEERIPSLDELEVIEKEEAGSRPKWDNKAQY) are Cytoplasmic-facing. The residue at position 17 (Ser17) is a Phosphoserine. A helical membrane pass occupies residues 42–62 (MLTCVGFCVGLGNVWRFPYLC). Topologically, residues 63-67 (QSHGG) are extracellular. The chain crosses the membrane as a helical span at residues 68–88 (GAFMIPFLILLVFEGIPLLYL). Over 89–119 (EFAIGQRLRKGSMGVWSSIHPALKGIGIASM) the chain is Cytoplasmic. The chain crosses the membrane as a helical span at residues 120-140 (FVSFMVGLYYNTIIAWVMWYF). Residues 141 to 192 (FNSFQEPLPWSECPLNQNQTGYVEECAKSSSVDYFWYRETLNISTSISDSGS) are Extracellular-facing. N-linked (GlcNAc...) asparagine glycans are attached at residues Asn158 and Asn182. Residues 193–213 (IQWWILLCLTCAWSVLYVCII) form a helical membrane-spanning segment. Topologically, residues 214–221 (RGIETTGK) are cytoplasmic. The chain crosses the membrane as a helical span at residues 222 to 242 (AVYITSTLPYVVLTIFLIRGL). Topologically, residues 243–268 (TLKGATNGIVFLFTPNITELSNPNTW) are extracellular. Residue Asn258 is glycosylated (N-linked (GlcNAc...) asparagine). A helical membrane pass occupies residues 269–289 (LDAGAQVFYSFSLAFGGLISF). Residues 290 to 304 (SSYNSVHNNCEMDSV) lie on the Cytoplasmic side of the membrane. The helical transmembrane segment at 305–325 (IVSVINGFTSVYAATVVYSII) threads the bilayer. At 326–413 (GFRATERFDD…TEAITKMPVS (88 aa)) the chain is on the extracellular side. N-linked (GlcNAc...) asparagine glycosylation is found at Asn354 and Asn368. The helical transmembrane segment at 414 to 434 (PLWSVLFFIMLFCLGLSSMFG) threads the bilayer. Over 435 to 456 (NMEGVVVPLQDLNITPKKWPKE) the chain is Cytoplasmic. Residues 457 to 477 (LLTGLICLGTYLIAFIFTLNS) traverse the membrane as a helical segment. Over 478–487 (GQYWLSLLDS) the chain is Extracellular. A helical membrane pass occupies residues 488–508 (FAGSIPLLIIAFCEMFAVVYV). The Cytoplasmic portion of the chain corresponds to 509 to 531 (YGVDRFNKDIEFMIGHKPNIFWQ). Residues 532–552 (VTWRVVSPLIMLVIFLFFFVI) form a helical membrane-spanning segment. Over 553–581 (EVNKTLMYSIWDPNYEEFPKSQKIPYPNW) the chain is Extracellular. The N-linked (GlcNAc...) asparagine glycan is linked to Asn555. A helical transmembrane segment spans residues 582 to 602 (VYAVVVTVAGVPCLSIPCFAI). At 603 to 634 (YKFIRNCCQKSDDHHGLVNTLSTASVNGDLKN) the chain is on the cytoplasmic side. Ser627 carries the post-translational modification Phosphoserine.

Belongs to the sodium:neurotransmitter symporter (SNF) (TC 2.A.22) family. SLC6A19 subfamily. As to quaternary structure, interacts in a tissue-specific manner with ACE2 in small intestine and with CLTRN in the kidney. Interacts with CLTRN; this interaction is required for trafficking of SLC6A19 to the plasma membrane and for its catalytic activation in kidneys. Interacts with ACE2; this interaction is required for trafficking of SLC6A19 to the plasma membrane and for its catalytic activation in intestine. Interacts with ANPEP; the interaction positively regulates its amino acid transporter activity. As to expression, predominantly expressed in kidney and small intestine (at protein level). Expressed in the intestinal brush border (at protein level). Expression not observed in other organs, such as lung, skeletal muscle, brain, liver and pancreas. In kidney, expression is localized in the renal cortex but not in the medulla. Substantial amounts of expression in the proximal tubules. The distal nephron segments and the glomeruli are consistently negative. In the small intestine, expression is exclusively localized in villus enterocytes. High resolution of the hybridization-positive villi reveals a gradient of expression with the highest levels in apical cells. Not detected in crypt cells or in any other cell types of the small intestine.

Its subcellular location is the cell membrane. It carries out the reaction L-alanine(in) + Na(+)(in) = L-alanine(out) + Na(+)(out). The catalysed reaction is L-cysteine(in) + Na(+)(in) = L-cysteine(out) + Na(+)(out). It catalyses the reaction L-glutamine(in) + Na(+)(in) = L-glutamine(out) + Na(+)(out). The enzyme catalyses glycine(in) + Na(+)(in) = glycine(out) + Na(+)(out). It carries out the reaction L-isoleucine(in) + Na(+)(in) = L-isoleucine(out) + Na(+)(out). The catalysed reaction is L-leucine(in) + Na(+)(in) = L-leucine(out) + Na(+)(out). It catalyses the reaction L-methionine(in) + Na(+)(in) = L-methionine(out) + Na(+)(out). The enzyme catalyses L-phenylalanine(in) + Na(+)(in) = L-phenylalanine(out) + Na(+)(out). It carries out the reaction L-serine(in) + Na(+)(in) = L-serine(out) + Na(+)(out). The catalysed reaction is L-tryptophan(in) + Na(+)(in) = L-tryptophan(out) + Na(+)(out). It catalyses the reaction L-tyrosine(in) + Na(+)(in) = L-tyrosine(out) + Na(+)(out). The enzyme catalyses L-valine(in) + Na(+)(in) = L-valine(out) + Na(+)(out). In terms of biological role, transporter that mediates resorption of neutral amino acids across the apical membrane of renal and intestinal epithelial cells. This uptake is sodium-dependent and chloride-independent. Requires CLTRN in kidney or ACE2 in intestine for cell surface expression and amino acid transporter activity. The protein is Sodium-dependent neutral amino acid transporter B(0)AT1 (Slc6a19) of Mus musculus (Mouse).